Reading from the N-terminus, the 439-residue chain is GTPase Der (439 aa).

EngA-type G domains lie at 2-166 and 176-351; these read SVVA…PAPA and TRLA…IEFN. GTP is bound by residues 8-15, 55-59, 118-121, 182-189, 229-233, and 294-297; these read GRPNVGKS, DTGGF, NKVD, DTAGI, and NKWD. The region spanning 352-436 is the KH-like domain; the sequence is RQVPTGVLNR…PIRLKFKDRN (85 aa).

Belongs to the TRAFAC class TrmE-Era-EngA-EngB-Septin-like GTPase superfamily. EngA (Der) GTPase family. In terms of assembly, associates with the 50S ribosomal subunit.

GTPase that plays an essential role in the late steps of ribosome biogenesis. The protein is GTPase Der of Syntrophotalea carbinolica (strain DSM 2380 / NBRC 103641 / GraBd1) (Pelobacter carbinolicus).